Consider the following 628-residue polypeptide: Dual specificity testis-specific protein kinase 1 (628 aa).

Residues 1–35 form a disordered region; sequence MAGERPPLRGPGPGETPVEGPGGAGGGPGRGRPSS. Over residues 20–30 the composition is skewed to gly residues; sequence GPGGAGGGPGR. The Protein kinase domain occupies 52-310; the sequence is FDCAEKIGAG…EITQHLEQIL (259 aa). Residues 58–66 and lysine 81 each bind ATP; that span reads IGAGFFSEV. Residue aspartate 170 is the Proton acceptor of the active site. Residue serine 215 is modified to Phosphoserine; by autocatalysis. 3 disordered regions span residues 330–376, 424–490, and 538–568; these read TYNQ…DNLT, PESL…QLPL, and RAQH…EEGL. Arginine 338 bears the Omega-N-methylarginine mark. The segment covering 348 to 357 has biased composition (basic and acidic residues); that stretch reads SDPRLSRSRS. The segment at 421–526 is required for interaction with YWHAB; it reads VASPESLVQP…NNNPPAVVVN (106 aa). Serine 439 is modified (phosphoserine). A compositionally biased stretch (pro residues) spans 478 to 487; it reads EPEPPGPAPQ. The segment at 529-626 is required for interaction with PARVA; the sequence is QGWAREPWNR…PTPSLQLPGA (98 aa). Positions 529–628 are required for interaction with SPRED1 and SPRY2. Required for TESK1-mediated dephosphorylation of SPRY2 and SPRY2 inhibition of ERK phosphorylation; that stretch reads QGWAREPWNR…PSLQLPGARS (100 aa).

Belongs to the protein kinase superfamily. TKL Ser/Thr protein kinase family. In terms of assembly, interacts (via both C- and N-termini) with SPRY4 (via C-terminus); the interaction inhibits TESK1 kinase activity. Interacts with TAOK1; the interaction inhibits TAOK1 kinase activity. Interacts (via C-terminus) with SPRED1 (via C-terminus); the interaction inhibits TESK1 kinase activity. Interacts (via C-terminus) with PARVA/PARVIN (via C-terminus); the interaction inhibits TESK1 kinase activity. Interacts with YWHAB/14-3-3 beta; the interaction is dependent on the phosphorylation of TESK1 Ser-439 and inhibits TESK1 kinase activity. Interacts with SPRY1, SPRY3 and SPRED2. Interacts (via C-terminus) with SPRY2 (via C-terminus); the interaction disrupts SPRY2 interaction with PPP2CA/PP2A-C, possibly by vesicular sequestration of SPRY2. Therefore dephosphorylation of SPRY2 by the serine/threonine-protein phosphatase 2A (PP2A) holoenzyme is lost, inhibiting its interaction with GRB2. It depends on Mg(2+) as a cofactor. Mn(2+) serves as cofactor. Post-translationally, autophosphorylated on serine and tyrosine residues. Weakly expressed in sciatic nerves (at protein level). Highly expressed in testicular germ cells. Expressed at low levels in brain, lung, heart, liver and kidney.

It localises to the cytoplasm. The protein resides in the perinuclear region. It is found in the cytoskeleton. The protein localises to the microtubule organizing center. Its subcellular location is the centrosome. It localises to the cell projection. The protein resides in the lamellipodium. It catalyses the reaction L-seryl-[protein] + ATP = O-phospho-L-seryl-[protein] + ADP + H(+). The enzyme catalyses L-threonyl-[protein] + ATP = O-phospho-L-threonyl-[protein] + ADP + H(+). It carries out the reaction L-tyrosyl-[protein] + ATP = O-phospho-L-tyrosyl-[protein] + ADP + H(+). Activated by autophosphorylation on Ser-215. Kinase activity is inhibited by SPRED1. Functionally, dual specificity protein kinase activity catalyzing autophosphorylation and phosphorylation of exogenous substrates on both serine/threonine and tyrosine residues. Regulates the cellular cytoskeleton by enhancing actin stress fiber formation via phosphorylation of cofilin and by preventing microtubule breakdown via inhibition of TAOK1/MARKK kinase activity. Inhibits podocyte motility via regulation of actin cytoskeletal dynamics and phosphorylation of CFL1. Positively regulates integrin-mediated cell spreading, via phosphorylation of cofilin. Suppresses ciliogenesis via multiple pathways; phosphorylation of CFL1, suppression of ciliary vesicle directional trafficking to the ciliary base, and by facilitating YAP1 nuclear localization where it acts as a transcriptional corepressor of the TEAD4 target genes AURKA and PLK1. Probably plays a central role at and after the meiotic phase of spermatogenesis. The chain is Dual specificity testis-specific protein kinase 1 (Tesk1) from Rattus norvegicus (Rat).